The following is a 313-amino-acid chain: Protein FixB (313 aa).

255–283 contacts FAD; the sequence is LYLAVGISGQIQHMVGANASQTIFAINKD.

Belongs to the ETF alpha-subunit/FixB family. In terms of assembly, heterodimer of FixA and FixB.

Its pathway is amine and polyamine metabolism; carnitine metabolism. Required for anaerobic carnitine reduction. May bring reductant to CaiA. This Escherichia coli O6:K15:H31 (strain 536 / UPEC) protein is Protein FixB.